Reading from the N-terminus, the 166-residue chain is NADH-ubiquinone oxidoreductase chain 6 (166 aa).

Transmembrane regions (helical) follow at residues 4-24 (FFSL…VVSA), 27-47 (QGVV…VFLG), 50-70 (FAAL…FGYC), 82-102 (VGGT…LLCL), 109-129 (LLVY…VGVF), and 135-155 (WGLI…LVIL).

It belongs to the complex I subunit 6 family.

The protein resides in the mitochondrion membrane. It carries out the reaction a ubiquinone + NADH + 5 H(+)(in) = a ubiquinol + NAD(+) + 4 H(+)(out). Its function is as follows. Core subunit of the mitochondrial membrane respiratory chain NADH dehydrogenase (Complex I) that is believed to belong to the minimal assembly required for catalysis. Complex I functions in the transfer of electrons from NADH to the respiratory chain. The immediate electron acceptor for the enzyme is believed to be ubiquinone. The protein is NADH-ubiquinone oxidoreductase chain 6 (MT-ND6) of Lycodon semicarinatus (Ryukyu odd-tooth snake).